A 64-amino-acid polypeptide reads, in one-letter code: Small ribosomal subunit protein bS18c (64 aa).

This sequence belongs to the bacterial ribosomal protein bS18 family. Part of the 30S ribosomal subunit.

The protein resides in the plastid. The protein localises to the chloroplast. This is Small ribosomal subunit protein bS18c (rps18) from Bigelowiella natans (Pedinomonas minutissima).